Reading from the N-terminus, the 911-residue chain is Protein translocase subunit SecA (911 aa).

ATP-binding positions include Gln87, 105–109 (GEGKT), and Asp512. The segment covering 561 to 571 (RHESRRIDNQL) has biased composition (basic and acidic residues). Residues 561–583 (RHESRRIDNQLRGRSGRQGDPGS) are disordered. Cys895, Cys897, Cys906, and His907 together coordinate Zn(2+).

It belongs to the SecA family. In terms of assembly, monomer and homodimer. Part of the essential Sec protein translocation apparatus which comprises SecA, SecYEG and auxiliary proteins SecDF-YajC and YidC. Zn(2+) serves as cofactor.

It localises to the cell inner membrane. The protein resides in the cytoplasm. It catalyses the reaction ATP + H2O + cellular proteinSide 1 = ADP + phosphate + cellular proteinSide 2.. Functionally, part of the Sec protein translocase complex. Interacts with the SecYEG preprotein conducting channel. Has a central role in coupling the hydrolysis of ATP to the transfer of proteins into and across the cell membrane, serving both as a receptor for the preprotein-SecB complex and as an ATP-driven molecular motor driving the stepwise translocation of polypeptide chains across the membrane. The protein is Protein translocase subunit SecA of Pseudomonas putida (strain W619).